A 405-amino-acid polypeptide reads, in one-letter code: Dynactin subunit 2 (405 aa).

Positions 1–25 (MADPKYADLPGIARNEPDVYETSDL) are disordered. Residue Ala2 is modified to N-acetylalanine. Phosphotyrosine is present on Tyr6. Phosphoserine is present on Ser85. Phosphotyrosine is present on Tyr88. Positions 105–132 (YQRLLHEVQELTTEVEKIKMTVKESATE) form a coiled coil. Thr136 bears the Phosphothreonine mark. The disordered stretch occupies residues 187–207 (KNTKGAGSGGKTTSGSPPDSS). A Phosphoserine modification is found at Ser324.

Belongs to the dynactin subunit 2 family. As to quaternary structure, subunit of dynactin, a multiprotein complex part of a tripartite complex with dynein and a adapter, such as BICDL1, BICD2 or HOOK3. The dynactin complex is built around ACTR1A/ACTB filament and consists of an actin-related filament composed of a shoulder domain, a pointed end and a barbed end. Its length is defined by its flexible shoulder domain. The soulder is composed of 2 DCTN1 subunits, 4 DCTN2 and 2 DCTN3. The 4 DCNT2 (via N-terminus) bind the ACTR1A filament and act as molecular rulers to determine the length. The pointed end is important for binding dynein-dynactin cargo adapters and consists of 4 subunits: ACTR10, DCNT4, DCTN5 and DCTN6. The barbed end is composed of a CAPZA1:CAPZB heterodimers, which binds ACTR1A/ACTB filament and dynactin and stabilizes dynactin. Interacts with BICD2 and CEP135. Interacts with DYNAP. Interacts with ECPAS. Interacts with MAPRE1.

The protein resides in the cytoplasm. It localises to the cytoskeleton. Its subcellular location is the microtubule organizing center. It is found in the centrosome. The protein localises to the membrane. Part of the dynactin complex that activates the molecular motor dynein for ultra-processive transport along microtubules. In the dynactin soulder domain, binds the ACTR1A filament and acts as a molecular ruler to determine the length. Modulates cytoplasmic dynein binding to an organelle, and plays a role in prometaphase chromosome alignment and spindle organization during mitosis. Involved in anchoring microtubules to centrosomes. May play a role in synapse formation during brain development. This is Dynactin subunit 2 (DCTN2) from Sus scrofa (Pig).